A 344-amino-acid polypeptide reads, in one-letter code: Protein RecA (344 aa).

Residue 65–72 participates in ATP binding; it reads GPESSGKT.

It belongs to the RecA family.

It localises to the cytoplasm. Its function is as follows. Can catalyze the hydrolysis of ATP in the presence of single-stranded DNA, the ATP-dependent uptake of single-stranded DNA by duplex DNA, and the ATP-dependent hybridization of homologous single-stranded DNAs. It interacts with LexA causing its activation and leading to its autocatalytic cleavage. The protein is Protein RecA of Xanthomonas oryzae pv. oryzae (strain PXO99A).